The following is a 623-amino-acid chain: Dynein axonemal intermediate chain 2 (623 aa).

WD repeat units follow at residues 214 to 254, 261 to 302, 362 to 401, 405 to 445, and 450 to 489; these read KPLS…LVAE, SHRD…EPIE, GHHGPIYALQRNPFYPKNFLTVGDWTARIWSEDSRESSIM, YHMA…CDPA, and VCDDPLFCLRVQDNGCLIACGSELGTTTLLEVSSSLSTLQ. The disordered stretch occupies residues 565–602; that stretch reads AEALKKKPKPRKKSSVKVEAEEEVEENVGEEEEAGGII. Residues 570–579 show a composition bias toward basic residues; that stretch reads KKPKPRKKSS. Over residues 584–598 the composition is skewed to acidic residues; the sequence is AEEEVEENVGEEEEA.

Belongs to the dynein intermediate chain family. Consists of at least two heavy chains and a number of intermediate and light chains. Interacts with DNAAF2. Interacts with DNAAF6/PIH1D3. Interacts with HEATR2; probably involved in outer arm dynein assembly. Interacts with CFAP53. As to expression, predominantly expressed in ovary, testis and lung.

The protein localises to the cytoplasm. It localises to the cytoskeleton. The protein resides in the cilium axoneme. It is found in the dynein axonemal particle. Its function is as follows. Part of the dynein complex of respiratory cilia. The sequence is that of Dynein axonemal intermediate chain 2 (Dnai2) from Mus musculus (Mouse).